Here is a 91-residue protein sequence, read N- to C-terminus: Gas vesicle protein K (91 aa).

It belongs to the gas vesicle GvpK family.

The protein resides in the gas vesicle. Might be involved in nucleating gas vesicle formation. Gas vesicles are hollow, gas filled proteinaceous nanostructures found in some microorganisms. It is not clear what function gas vesicles perform in soil bacteria. The sequence is that of Gas vesicle protein K from Streptomyces sp. (strain CB03234).